Here is a 111-residue protein sequence, read N- to C-terminus: Phosphoribosyl-ATP pyrophosphatase (111 aa).

This sequence belongs to the PRA-PH family.

Its subcellular location is the cytoplasm. It catalyses the reaction 1-(5-phospho-beta-D-ribosyl)-ATP + H2O = 1-(5-phospho-beta-D-ribosyl)-5'-AMP + diphosphate + H(+). Its pathway is amino-acid biosynthesis; L-histidine biosynthesis; L-histidine from 5-phospho-alpha-D-ribose 1-diphosphate: step 2/9. The polypeptide is Phosphoribosyl-ATP pyrophosphatase (Pseudomonas putida (strain W619)).